The sequence spans 429 residues: Glutamate-1-semialdehyde 2,1-aminomutase 1 (429 aa).

Lys267 carries the post-translational modification N6-(pyridoxal phosphate)lysine.

The protein belongs to the class-III pyridoxal-phosphate-dependent aminotransferase family. HemL subfamily. Homodimer. It depends on pyridoxal 5'-phosphate as a cofactor.

The protein localises to the cytoplasm. It carries out the reaction (S)-4-amino-5-oxopentanoate = 5-aminolevulinate. Its pathway is porphyrin-containing compound metabolism; protoporphyrin-IX biosynthesis; 5-aminolevulinate from L-glutamyl-tRNA(Glu): step 2/2. The sequence is that of Glutamate-1-semialdehyde 2,1-aminomutase 1 from Bacillus velezensis (strain DSM 23117 / BGSC 10A6 / LMG 26770 / FZB42) (Bacillus amyloliquefaciens subsp. plantarum).